The sequence spans 445 residues: NAD-specific glutamate dehydrogenase (445 aa).

The active site involves lysine 124. 235–241 contacts NAD(+); that stretch reads GFGNVAW.

Belongs to the Glu/Leu/Phe/Val dehydrogenases family. In terms of assembly, homohexamer.

The catalysed reaction is L-glutamate + NAD(+) + H2O = 2-oxoglutarate + NH4(+) + NADH + H(+). In Bacteroides fragilis (strain YCH46), this protein is NAD-specific glutamate dehydrogenase (gdhB).